We begin with the raw amino-acid sequence, 300 residues long: N-acetylmuramic acid 6-phosphate etherase (300 aa).

The SIS domain maps to 57–220 (VSAAFARQGR…SSAAMIRSGK (164 aa)). Residue Glu85 is the Proton donor of the active site. Glu116 is a catalytic residue.

It belongs to the GCKR-like family. MurNAc-6-P etherase subfamily. Homodimer.

It carries out the reaction N-acetyl-D-muramate 6-phosphate + H2O = N-acetyl-D-glucosamine 6-phosphate + (R)-lactate. The protein operates within amino-sugar metabolism; N-acetylmuramate degradation. It participates in amino-sugar metabolism; 1,6-anhydro-N-acetylmuramate degradation. It functions in the pathway cell wall biogenesis; peptidoglycan recycling. In terms of biological role, specifically catalyzes the cleavage of the D-lactyl ether substituent of MurNAc 6-phosphate, producing GlcNAc 6-phosphate and D-lactate. Together with AnmK, is also required for the utilization of anhydro-N-acetylmuramic acid (anhMurNAc) either imported from the medium or derived from its own cell wall murein, and thus plays a role in cell wall recycling. This is N-acetylmuramic acid 6-phosphate etherase from Edwardsiella ictaluri (strain 93-146).